The following is an 89-amino-acid chain: Large ribosomal subunit protein bL28 (89 aa).

It belongs to the bacterial ribosomal protein bL28 family.

The sequence is that of Large ribosomal subunit protein bL28 from Chlamydia muridarum (strain MoPn / Nigg).